A 598-amino-acid chain; its full sequence is Rho-related protein racA (598 aa).

11–17 contributes to the GTP binding site; sequence DGAVGKS. The Effector region signature appears at 32-40; the sequence is YVPTVFDNY. GTP is bound by residues 57–61 and 115–118; these read DTAGQ and TKND. The tract at residues 175 to 210 is disordered; it reads ASAKKKGGFFSSSSSSSSSSSSKSSEKSVPIPPVMP. Residues 182–197 show a composition bias toward low complexity; the sequence is GFFSSSSSSSSSSSSK. BTB domains lie at 239 to 344 and 405 to 472; these read SDVK…NYLD and SDIQ…PIEE.

It in the N-terminal section; belongs to the small GTPase superfamily. Rho family. As to quaternary structure, interacts with pakB.

This chain is Rho-related protein racA (racA), found in Dictyostelium discoideum (Social amoeba).